The following is a 1362-amino-acid chain: Leptomycin B resistance protein pmd1 (1362 aa).

The segment at 1 to 45 (MSLHSKKSTSTVKDNEHSLDLSIKSIPSNEKNFSTEKSENEASES) is disordered. Topologically, residues 1–91 (MSLHSKKSTS…RILSYADKWD (91 aa)) are cytoplasmic. Over residues 33–45 (FSTEKSENEASES) the composition is skewed to basic and acidic residues. 6 helical membrane-spanning segments follow: residues 92–115 (IMLQLAGTITGIGAGLGMPLMSLV), 138–162 (TVDHFCLYFIYIAIGVFGCSYIYTV), 220–237 (LVFFAIATFVSGFVIAFI), 244–264 (LILSSMFPAICGGIGLGVPFI), 320–346 (AIAMGLMVGWMFFVAYGVYGLAFWEGG), and 354–374 (LDVSKLIGCFFAVLIASYSLA). In terms of domain architecture, ABC transmembrane type-1 1 spans 95–385 (QLAGTITGIG…ISPKMQSFVS (291 aa)). The Cytoplasmic segment spans residues 375-788 (NISPKMQSFV…LWFIHSFVRT (414 aa)). An ABC transporter 1 domain is found at 420-665 (IELKNIRFVY…NGAYARLVEA (246 aa)). 455-462 (GASGSGKS) serves as a coordination point for ATP. Positions 748-768 (LPPADVGELNEEPKKSKKSKK) are disordered. A run of 6 helical transmembrane segments spans residues 789–809 (MIEIICLLIGILASMICGAAY), 835–859 (VNVFAVYWLILAIVQFFAYAISNFA), 916–935 (LGTFFQILTNIISVTILSLA), 940–957 (LGLVTLSTSPVIITAGYY), 1022–1040 (GLFFSAAQGVTFLINALTF), and 1054–1072 (IVQFYTCFIAIVFGIQQAG). The ABC transmembrane type-1 2 domain occupies 795-1083 (LLIGILASMI…FFGYSADVTK (289 aa)). Residues 1073-1362 (QFFGYSADVT…LVVEQGLNKA (290 aa)) are Cytoplasmic-facing. One can recognise an ABC transporter 2 domain in the interval 1119–1356 (IEFRQVEFSY…RGRYYELVVE (238 aa)). An ATP-binding site is contributed by 1154 to 1161 (GSSGCGKS).

This sequence belongs to the ABC transporter superfamily. ABCB family. Multidrug resistance exporter (TC 3.A.1.201) subfamily.

The protein resides in the membrane. Its function is as follows. May be a transmembrane transporter of the mating factor, namely P-factor or M-factor. Confers resistance to leptomycin B and to several other antifungal drugs. In Schizosaccharomyces pombe (strain 972 / ATCC 24843) (Fission yeast), this protein is Leptomycin B resistance protein pmd1 (pmd1).